The sequence spans 146 residues: Hemoglobin subunit beta (146 aa).

The 145-residue stretch at 2 to 146 (HWSAEEKQLI…VAHALARKYH (145 aa)) folds into the Globin domain. Positions 63 and 92 each coordinate heme b.

It belongs to the globin family. In terms of assembly, heterotetramer of two alpha chains and two beta chains. In terms of tissue distribution, red blood cells.

Involved in oxygen transport from the lung to the various peripheral tissues. In Columba livia (Rock dove), this protein is Hemoglobin subunit beta (HBB).